Consider the following 152-residue polypeptide: MGLEKSFILFSLLVLVLGWVQPSLGVESRESSADKFKRQHMDPESPSKSSPTYCNQMMKRQGMTKGSCKPVNTFVHEPLEDVQAICSQGQVTCKNGRNNCHKSSSTLHITECRLKGSSKYPNCEYTTTDSQKHIIIACEGNPLVPVHYDDTV.

Residues 1–25 (MGLEKSFILFSLLVLVLGWVQPSLG) form the signal peptide. Basic and acidic residues predominate over residues 31–45 (SSADKFKRQHMDPES). The tract at residues 31–53 (SSADKFKRQHMDPESPSKSSPTY) is disordered. The substrate site is built by Lys-35 and Arg-38. His-40 serves as the catalytic Proton acceptor. Cystine bridges form between Cys-54–Cys-112, Cys-68–Cys-123, Cys-86–Cys-138, and Cys-93–Cys-100. Substrate-binding positions include 69–73 (KPVNT), Lys-94, and Arg-113. Catalysis depends on His-147, which acts as the Proton donor.

It belongs to the pancreatic ribonuclease family. In terms of assembly, monomer.

Its subcellular location is the secreted. The catalysed reaction is an [RNA] containing cytidine + H2O = an [RNA]-3'-cytidine-3'-phosphate + a 5'-hydroxy-ribonucleotide-3'-[RNA].. The enzyme catalyses an [RNA] containing uridine + H2O = an [RNA]-3'-uridine-3'-phosphate + a 5'-hydroxy-ribonucleotide-3'-[RNA].. Endonuclease that catalyzes the cleavage of RNA on the 3' side of pyrimidine nucleotides. Acts on single-stranded and double-stranded RNA. This chain is Ribonuclease pancreatic beta-type, found in Rattus exulans (Polynesian rat).